A 222-amino-acid polypeptide reads, in one-letter code: ATP synthase F(0) complex subunit a (222 aa).

The next 6 membrane-spanning stretches (helical) occupy residues 7–27 (AFFD…AILL), 64–84 (WSLM…LGLL), 93–113 (QLTV…VLGF), 132–152 (FLIP…PITL), 160–180 (ITAG…LLSV), and 197–219 (ILEL…LYLH).

It belongs to the ATPase A chain family. Component of the ATP synthase complex composed at least of ATP5F1A/subunit alpha, ATP5F1B/subunit beta, ATP5MC1/subunit c (homooctomer), MT-ATP6/subunit a, MT-ATP8/subunit 8, ATP5ME/subunit e, ATP5MF/subunit f, ATP5MG/subunit g, ATP5MK/subunit k, ATP5MJ/subunit j, ATP5F1C/subunit gamma, ATP5F1D/subunit delta, ATP5F1E/subunit epsilon, ATP5PF/subunit F6, ATP5PB/subunit b, ATP5PD/subunit d, ATP5PO/subunit OSCP. ATP synthase complex consists of a soluble F(1) head domain (subunits alpha(3) and beta(3)) - the catalytic core - and a membrane F(0) domain - the membrane proton channel (subunits c, a, 8, e, f, g, k and j). These two domains are linked by a central stalk (subunits gamma, delta, and epsilon) rotating inside the F1 region and a stationary peripheral stalk (subunits F6, b, d, and OSCP). Interacts with DNAJC30; interaction is direct.

The protein localises to the mitochondrion inner membrane. It carries out the reaction H(+)(in) = H(+)(out). Functionally, subunit a, of the mitochondrial membrane ATP synthase complex (F(1)F(0) ATP synthase or Complex V) that produces ATP from ADP in the presence of a proton gradient across the membrane which is generated by electron transport complexes of the respiratory chain. ATP synthase complex consist of a soluble F(1) head domain - the catalytic core - and a membrane F(1) domain - the membrane proton channel. These two domains are linked by a central stalk rotating inside the F(1) region and a stationary peripheral stalk. During catalysis, ATP synthesis in the catalytic domain of F(1) is coupled via a rotary mechanism of the central stalk subunits to proton translocation. With the subunit c (ATP5MC1), forms the proton-conducting channel in the F(0) domain, that contains two crucial half-channels (inlet and outlet) that facilitate proton movement from the mitochondrial intermembrane space (IMS) into the matrix. Protons are taken up via the inlet half-channel and released through the outlet half-channel, following a Grotthuss mechanism. This is ATP synthase F(0) complex subunit a from Elephas maximus (Indian elephant).